The chain runs to 178 residues: Endoribonuclease YbeY (178 aa).

Residues His118, His122, and His128 each coordinate Zn(2+). The interval 156–178 (YQQDRQDERDRRLLDKSRYFDEP) is disordered. Over residues 159–178 (DRQDERDRRLLDKSRYFDEP) the composition is skewed to basic and acidic residues.

The protein belongs to the endoribonuclease YbeY family. It depends on Zn(2+) as a cofactor.

Its subcellular location is the cytoplasm. Its function is as follows. Single strand-specific metallo-endoribonuclease involved in late-stage 70S ribosome quality control and in maturation of the 3' terminus of the 16S rRNA. In Mycobacterium marinum (strain ATCC BAA-535 / M), this protein is Endoribonuclease YbeY.